Here is a 54-residue protein sequence, read N- to C-terminus: Light-harvesting protein B-880 beta chain (54 aa).

Residues 1 to 20 (AEDRSSLSGVSDAEAKEFHA) lie on the Cytoplasmic side of the membrane. The a bacteriochlorophyll site is built by histidine 19 and histidine 37. A helical transmembrane segment spans residues 21 to 43 (LFVSSFMGFMVVAVLAHVLAWAW). Residues 44-54 (RPWIPGPKGWA) are Periplasmic-facing.

Belongs to the antenna complex beta subunit family. The core complex is formed by different alpha and beta chains, binding bacteriochlorophyll molecules, and arranged most probably in tetrameric structures disposed around the reaction center. The non-pigmented gamma chains may constitute additional components.

It localises to the cell inner membrane. Functionally, antenna complexes are light-harvesting systems, which transfer the excitation energy to the reaction centers. The protein is Light-harvesting protein B-880 beta chain of Rhodoblastus acidophilus (Rhodopseudomonas acidophila).